A 380-amino-acid chain; its full sequence is Cell division protein ZipA (380 aa).

The Periplasmic portion of the chain corresponds to 1 to 7 (MEDNFRN). A helical membrane pass occupies residues 8 to 28 (VLIILSAIVITAIFIHGLWTL). Over 29-380 (RKQKNPYKLK…DRKSRIALVE (352 aa)) the chain is Cytoplasmic.

It belongs to the ZipA family. Interacts with FtsZ via their C-terminal domains.

The protein resides in the cell inner membrane. Its function is as follows. Essential cell division protein that stabilizes the FtsZ protofilaments by cross-linking them and that serves as a cytoplasmic membrane anchor for the Z ring. Also required for the recruitment to the septal ring of downstream cell division proteins. In Colwellia psychrerythraea (strain 34H / ATCC BAA-681) (Vibrio psychroerythus), this protein is Cell division protein ZipA.